Here is a 206-residue protein sequence, read N- to C-terminus: Peptidyl-tRNA hydrolase (206 aa).

Tyrosine 19 is a tRNA binding site. Histidine 24 serves as the catalytic Proton acceptor. Residues tyrosine 70, asparagine 72, and asparagine 118 each coordinate tRNA.

This sequence belongs to the PTH family. As to quaternary structure, monomer.

It localises to the cytoplasm. It catalyses the reaction an N-acyl-L-alpha-aminoacyl-tRNA + H2O = an N-acyl-L-amino acid + a tRNA + H(+). In terms of biological role, hydrolyzes ribosome-free peptidyl-tRNAs (with 1 or more amino acids incorporated), which drop off the ribosome during protein synthesis, or as a result of ribosome stalling. Functionally, catalyzes the release of premature peptidyl moieties from peptidyl-tRNA molecules trapped in stalled 50S ribosomal subunits, and thus maintains levels of free tRNAs and 50S ribosomes. This is Peptidyl-tRNA hydrolase from Prochlorococcus marinus (strain MIT 9313).